The chain runs to 444 residues: Proline--tRNA ligase (444 aa).

This sequence belongs to the class-II aminoacyl-tRNA synthetase family. ProS type 2 subfamily. In terms of assembly, homodimer.

Its subcellular location is the cytoplasm. The catalysed reaction is tRNA(Pro) + L-proline + ATP = L-prolyl-tRNA(Pro) + AMP + diphosphate. Catalyzes the attachment of proline to tRNA(Pro) in a two-step reaction: proline is first activated by ATP to form Pro-AMP and then transferred to the acceptor end of tRNA(Pro). This chain is Proline--tRNA ligase, found in Bradyrhizobium sp. (strain BTAi1 / ATCC BAA-1182).